Here is a 350-residue protein sequence, read N- to C-terminus: D-alanine--D-alanine ligase (350 aa).

Residues Asn133–Gly334 enclose the ATP-grasp domain. ATP is bound at residue Phe161–Gln216. The Mg(2+) site is built by Asp288, Glu300, and Asn302.

It belongs to the D-alanine--D-alanine ligase family. It depends on Mg(2+) as a cofactor. Mn(2+) serves as cofactor.

It is found in the cytoplasm. It carries out the reaction 2 D-alanine + ATP = D-alanyl-D-alanine + ADP + phosphate + H(+). It participates in cell wall biogenesis; peptidoglycan biosynthesis. Functionally, cell wall formation. The chain is D-alanine--D-alanine ligase from Finegoldia magna (strain ATCC 29328 / DSM 20472 / WAL 2508) (Peptostreptococcus magnus).